A 435-amino-acid polypeptide reads, in one-letter code: Diaminobutyrate--2-oxoglutarate transaminase (435 aa).

Lysine 266 is subject to N6-(pyridoxal phosphate)lysine.

The protein belongs to the class-III pyridoxal-phosphate-dependent aminotransferase family. It depends on pyridoxal 5'-phosphate as a cofactor.

It carries out the reaction L-2,4-diaminobutanoate + 2-oxoglutarate = L-aspartate 4-semialdehyde + L-glutamate. It participates in amine and polyamine biosynthesis; ectoine biosynthesis; L-ectoine from L-aspartate 4-semialdehyde: step 1/3. In terms of biological role, catalyzes reversively the conversion of L-aspartate beta-semialdehyde (ASA) to L-2,4-diaminobutyrate (DABA) by transamination with L-glutamate. The polypeptide is Diaminobutyrate--2-oxoglutarate transaminase (ectB) (Bordetella bronchiseptica (strain ATCC BAA-588 / NCTC 13252 / RB50) (Alcaligenes bronchisepticus)).